Here is a 392-residue protein sequence, read N- to C-terminus: Hercynylcysteine sulfoxide lyase (392 aa).

N6-(pyridoxal phosphate)lysine is present on Lys-219.

The protein belongs to the class-V pyridoxal-phosphate-dependent aminotransferase family. EgtE subfamily. The cofactor is pyridoxal 5'-phosphate.

It is found in the cytoplasm. It localises to the nucleus. The enzyme catalyses S-(hercyn-2-yl)-L-cysteine S-oxide + AH2 + H(+) = ergothioneine + pyruvate + A + NH4(+). Its pathway is amino-acid biosynthesis; ergothioneine biosynthesis. Functionally, catalyzes the conversion of hercynylcysteine sulfoxide to ergothioneine by cleaving the cysteine residue at the sulfur atom, the last step in the biosynthesis pathway of ergothioneine. This is Hercynylcysteine sulfoxide lyase from Schizosaccharomyces pombe (strain 972 / ATCC 24843) (Fission yeast).